The sequence spans 246 residues: Ribonuclease 3 (246 aa).

Positions 16–144 (LLEFQKQAGL…VIGAYYIDSG (129 aa)) constitute an RNase III domain. Glu57 contributes to the Mg(2+) binding site. The active site involves Asp61. 2 residues coordinate Mg(2+): Asp130 and Glu133. Glu133 is an active-site residue. In terms of domain architecture, DRBM spans 171–240 (DYKSLLQELV…AKVAYENLCS (70 aa)).

Belongs to the ribonuclease III family. In terms of assembly, homodimer. The cofactor is Mg(2+).

The protein localises to the cytoplasm. The enzyme catalyses Endonucleolytic cleavage to 5'-phosphomonoester.. Its function is as follows. Digests double-stranded RNA. Involved in the processing of primary rRNA transcript to yield the immediate precursors to the large and small rRNAs (23S and 16S). Processes some mRNAs, and tRNAs when they are encoded in the rRNA operon. Processes pre-crRNA and tracrRNA of type II CRISPR loci if present in the organism. The polypeptide is Ribonuclease 3 (Treponema denticola (strain ATCC 35405 / DSM 14222 / CIP 103919 / JCM 8153 / KCTC 15104)).